A 170-amino-acid chain; its full sequence is Peptide deformylase (170 aa).

Cysteine 93 and histidine 135 together coordinate Fe cation. Glutamate 136 is a catalytic residue. Histidine 139 contributes to the Fe cation binding site.

The protein belongs to the polypeptide deformylase family. Fe(2+) is required as a cofactor.

The catalysed reaction is N-terminal N-formyl-L-methionyl-[peptide] + H2O = N-terminal L-methionyl-[peptide] + formate. Removes the formyl group from the N-terminal Met of newly synthesized proteins. Requires at least a dipeptide for an efficient rate of reaction. N-terminal L-methionine is a prerequisite for activity but the enzyme has broad specificity at other positions. This is Peptide deformylase from Acidobacterium capsulatum (strain ATCC 51196 / DSM 11244 / BCRC 80197 / JCM 7670 / NBRC 15755 / NCIMB 13165 / 161).